The chain runs to 134 residues: Large ribosomal subunit protein mL41 (134 aa).

The N-terminal 13 residues, 1–13 (MGFLTAVTQGLVR), are a transit peptide targeting the mitochondrion.

The protein belongs to the mitochondrion-specific ribosomal protein mL41 family. Component of the mitochondrial ribosome large subunit (39S) which comprises a 16S rRNA and about 50 distinct proteins. Interacts with BCL2. Was also identified in the 28S mitochondrial ribosome.

The protein localises to the mitochondrion. Component of the mitochondrial ribosome large subunit. Also involved in apoptosis and cell cycle. Enhances p53/TP53 stability, thereby contributing to p53/TP53-induced apoptosis in response to growth-inhibitory condition. Enhances p53/TP53 translocation to the mitochondria. Has the ability to arrest the cell cycle at the G1 phase, possibly by stabilizing the CDKN1A and CDKN1B (p27Kip1) proteins. The protein is Large ribosomal subunit protein mL41 (Mrpl41) of Rattus norvegicus (Rat).